Here is a 1006-residue protein sequence, read N- to C-terminus: Phosphatidylinositol 4,5-bisphosphate 5-phosphatase A (1006 aa).

The disordered stretch occupies residues 1-416 (MEGQSSRGSR…SSSPWSAQPT (416 aa)). The span at 27–41 (VAQTGAPSKVDSSFQ) shows a compositional bias: polar residues. At arginine 56 the chain carries Asymmetric dimethylarginine; alternate. Arginine 56 carries the post-translational modification Omega-N-methylarginine; alternate. Position 65 is an omega-N-methylarginine (arginine 65). An Asymmetric dimethylarginine modification is found at arginine 76. Arginine 83 bears the Asymmetric dimethylarginine; alternate mark. Residue arginine 83 is modified to Omega-N-methylarginine; alternate. Positions 94-112 (GQKTATAHRSSSLAPTSVG) are enriched in polar residues. An RSXSXX motif 1 motif is present at residues 102–107 (RSSSLA). The span at 180 to 193 (LAASGLSLALASEE) shows a compositional bias: low complexity. Over residues 196–209 (PELPSTPSPVPSPV) the composition is skewed to pro residues. The span at 210-234 (LSPTQEQALAPASTASGAASVGQTS) shows a compositional bias: low complexity. Residues 256–273 (PAQTSGPTGSPPCIQTSP) are compositionally biased toward polar residues. Phosphoserine is present on residues serine 291 and serine 324. Positions 337–347 (VPPPLPKPPRS) are enriched in pro residues. The short motif at 345-350 (PRSPSR) is the SH3-binding element. Low complexity-rich tracts occupy residues 348–360 (PSRS…NRSP) and 398–409 (TTSSSTSTLSSS). An RSXSXX motif 2 motif is present at residues 350–355 (RSPSHS). The catalytic stretch occupies residues 425 to 728 (ITVVTWNVGT…SDHKPVAAQF (304 aa)). The required for ruffle localization stretch occupies residues 729–840 (LLQFAFRDDM…IGITEPFQIS (112 aa)). Residues 844–858 (SELASSSTDSSGTSS) show a composition bias toward low complexity. Residues 844–1006 (SELASSSTDS…RGLEEGGLGP (163 aa)) form a disordered region. 2 short sequence motifs (RSXSXX motif) span residues 874–879 (RSPSPG) and 885–890 (RSRSPG). Position 903 is a phosphoserine (serine 903). An RSXSXX motif 5 motif is present at residues 911-916 (RSPSPQ). Low complexity predominate over residues 927–946 (RSSNGSSRGSSEEGPSGLPG). At serine 990 the chain carries Phosphoserine.

Belongs to the inositol 1,4,5-trisphosphate 5-phosphatase type II family.

Its subcellular location is the cytoplasm. The enzyme catalyses 1D-myo-inositol 1,4,5-trisphosphate + H2O = 1D-myo-inositol 1,4-bisphosphate + phosphate. It carries out the reaction 1D-myo-inositol 1,3,4,5-tetrakisphosphate + H2O = 1D-myo-inositol 1,3,4-trisphosphate + phosphate. It catalyses the reaction a 1,2-diacyl-sn-glycero-3-phospho-(1D-myo-inositol-4,5-bisphosphate) + H2O = a 1,2-diacyl-sn-glycero-3-phospho-(1D-myo-inositol 4-phosphate) + phosphate. In terms of biological role, inositol 5-phosphatase, which converts inositol 1,4,5-trisphosphate to inositol 1,4-bisphosphate. Also converts phosphatidylinositol 4,5-bisphosphate to phosphatidylinositol 4-phosphate and inositol 1,3,4,5-tetrakisphosphate to inositol 1,3,4-trisphosphate in vitro. May be involved in modulation of the function of inositol and phosphatidylinositol polyphosphate-binding proteins that are present at membranes ruffles. This chain is Phosphatidylinositol 4,5-bisphosphate 5-phosphatase A (INPP5J), found in Homo sapiens (Human).